Reading from the N-terminus, the 326-residue chain is tRNA-modifying protein YgfZ (326 aa).

2 residues coordinate folate: W27 and W189.

The protein belongs to the tRNA-modifying YgfZ family.

The protein resides in the cytoplasm. Folate-binding protein involved in regulating the level of ATP-DnaA and in the modification of some tRNAs. It is probably a key factor in regulatory networks that act via tRNA modification, such as initiation of chromosomal replication. This Escherichia coli O157:H7 (strain EC4115 / EHEC) protein is tRNA-modifying protein YgfZ.